Reading from the N-terminus, the 108-residue chain is Synaptobrevin-1 (108 aa).

A disordered region spans residues 1 to 25 (MDAQGDAGAQGGSQGPRPSNKRLQQ). Residues 1 to 85 (MDAQGDAGAQ…KRKYWWKNIK (85 aa)) lie on the Cytoplasmic side of the membrane. One can recognise a v-SNARE coiled-coil homology domain in the interval 22–82 (RLQQTQAQVD…ATLKRKYWWK (61 aa)). A helical; Anchor for type IV membrane protein membrane pass occupies residues 86–106 (MMIIMCAIVVILIIIIVLWAG). The Extracellular segment spans residues 107-108 (GK).

It belongs to the synaptobrevin family. As to quaternary structure, part of the SNARE core complex containing CBG09569/SNAP25, snb-1/VAMP2 and CBG03570/STX1A. This complex binds to cpx-1/CPLX1.

The protein resides in the cytoplasmic vesicle. It is found in the secretory vesicle. The protein localises to the synaptic vesicle membrane. Its subcellular location is the cell membrane. It localises to the synapse. The protein resides in the synaptosome. Its function is as follows. Involved in the targeting and/or fusion of transport vesicles to their target membrane. Acts in neuronal exocytosis of synaptic transmission. Likely to have a role in cholinergic transmisson. Required for viability, coordinated movement and M3 pharynx motor neuron function. The chain is Synaptobrevin-1 from Caenorhabditis briggsae.